We begin with the raw amino-acid sequence, 253 residues long: Imidazole glycerol phosphate synthase subunit HisF (253 aa).

Residues D11 and D130 contribute to the active site.

This sequence belongs to the HisA/HisF family. In terms of assembly, heterodimer of HisH and HisF.

It localises to the cytoplasm. It carries out the reaction 5-[(5-phospho-1-deoxy-D-ribulos-1-ylimino)methylamino]-1-(5-phospho-beta-D-ribosyl)imidazole-4-carboxamide + L-glutamine = D-erythro-1-(imidazol-4-yl)glycerol 3-phosphate + 5-amino-1-(5-phospho-beta-D-ribosyl)imidazole-4-carboxamide + L-glutamate + H(+). Its pathway is amino-acid biosynthesis; L-histidine biosynthesis; L-histidine from 5-phospho-alpha-D-ribose 1-diphosphate: step 5/9. IGPS catalyzes the conversion of PRFAR and glutamine to IGP, AICAR and glutamate. The HisF subunit catalyzes the cyclization activity that produces IGP and AICAR from PRFAR using the ammonia provided by the HisH subunit. This is Imidazole glycerol phosphate synthase subunit HisF from Geotalea uraniireducens (strain Rf4) (Geobacter uraniireducens).